We begin with the raw amino-acid sequence, 103 residues long: Large ribosomal subunit protein bL21 (103 aa).

The protein belongs to the bacterial ribosomal protein bL21 family. As to quaternary structure, part of the 50S ribosomal subunit. Contacts protein L20.

This protein binds to 23S rRNA in the presence of protein L20. The sequence is that of Large ribosomal subunit protein bL21 from Actinobacillus pleuropneumoniae serotype 5b (strain L20).